Here is a 262-residue protein sequence, read N- to C-terminus: Tetrahydromethanopterin S-methyltransferase subunit C (262 aa).

The next 6 helical transmembrane spans lie at 35–57 (FVPSLAMLIGGLLAAGACVAGAN), 70–92 (GVPSIGMVSLGMGTISALAGVLI), 97–119 (GLPVLATPILAAVIAVVVGFIVG), 140–162 (LSLMGALAILGFCTAFAGGFSAD), 172–194 (GVIALAFIAAGMSILHPFNACIG), and 214–236 (WLIFSIAKLDIVSIVVAAIFWLY).

This sequence belongs to the MtrC family. In terms of assembly, the complex is composed of 8 subunits; MtrA, MtrB, MtrC, MtrD, MtrE, MtrF, MtrG and MtrH.

Its subcellular location is the cell membrane. The catalysed reaction is 5-methyl-5,6,7,8-tetrahydromethanopterin + coenzyme M + 2 Na(+)(in) = 5,6,7,8-tetrahydromethanopterin + methyl-coenzyme M + 2 Na(+)(out). It functions in the pathway one-carbon metabolism; methanogenesis from CO(2); methyl-coenzyme M from 5,10-methylene-5,6,7,8-tetrahydromethanopterin: step 2/2. Its function is as follows. Part of a complex that catalyzes the formation of methyl-coenzyme M and tetrahydromethanopterin from coenzyme M and methyl-tetrahydromethanopterin. This is an energy-conserving, sodium-ion translocating step. This is Tetrahydromethanopterin S-methyltransferase subunit C from Methanococcus maripaludis (strain DSM 14266 / JCM 13030 / NBRC 101832 / S2 / LL).